The primary structure comprises 376 residues: Homocitrate synthase (376 aa).

The 256-residue stretch at tryptophan 4–proline 259 folds into the Pyruvate carboxyltransferase domain. Arginine 12 serves as a coordination point for 2-oxoglutarate. Residue glutamate 13 participates in Mg(2+) binding. Histidine 72 contributes to the 2-oxoglutarate binding site. Aspartate 92 provides a ligand contact to L-lysine. Arginine 133 is a binding site for 2-oxoglutarate. Positions 135 and 166 each coordinate L-lysine. Threonine 166 serves as a coordination point for 2-oxoglutarate. Mg(2+) contacts are provided by histidine 195 and histidine 197. Histidine 292 functions as the Proton acceptor in the catalytic mechanism.

It belongs to the alpha-IPM synthase/homocitrate synthase family. Homocitrate synthase LYS20/LYS21 subfamily. In terms of assembly, exists in an equilibrium between monomer and homodimer. Mg(2+) serves as cofactor. Requires Mn(2+) as cofactor.

It is found in the cytoplasm. The catalysed reaction is acetyl-CoA + 2-oxoglutarate + H2O = (2R)-homocitrate + CoA + H(+). It catalyses the reaction oxaloacetate + acetyl-CoA + H2O = citrate + CoA + H(+). It functions in the pathway amino-acid biosynthesis; L-lysine biosynthesis via AAA pathway; L-alpha-aminoadipate from 2-oxoglutarate: step 1/5. With respect to regulation, is highly and competitively inhibited by lysine that binds to the active site and competes with 2-oxoglutarate. Is also slightly inhibited by arginine and 2-aminoethylcysteine. Functionally, catalyzes the aldol-type condensation of 2-oxoglutarate with acetyl-CoA to yield homocitrate. Carries out the first step of the alpha-aminoadipate (AAA) lysine biosynthesis pathway. To a lesser extent, can also use oxaloacetate in place of 2-oxoglutarate, leading to citrate. Does not display 2-isopropylmalate synthase activity since it cannot use 2-oxoisovalerate. The sequence is that of Homocitrate synthase from Thermus thermophilus (strain ATCC BAA-163 / DSM 7039 / HB27).